Here is a 465-residue protein sequence, read N- to C-terminus: Cysteine--tRNA ligase (465 aa).

Cys28 contributes to the Zn(2+) binding site. The 'HIGH' region signature appears at 30–40; sequence PTVYNYIHIGN. Residues Cys208, His233, and Glu237 each contribute to the Zn(2+) site. The short motif at 265–269 is the 'KMSKS' region element; sequence KMSKS. Residue Lys268 participates in ATP binding.

This sequence belongs to the class-I aminoacyl-tRNA synthetase family. As to quaternary structure, monomer. Zn(2+) serves as cofactor.

Its subcellular location is the cytoplasm. The enzyme catalyses tRNA(Cys) + L-cysteine + ATP = L-cysteinyl-tRNA(Cys) + AMP + diphosphate. The polypeptide is Cysteine--tRNA ligase (Exiguobacterium sibiricum (strain DSM 17290 / CCUG 55495 / CIP 109462 / JCM 13490 / 255-15)).